Reading from the N-terminus, the 240-residue chain is Lactate utilization protein C (240 aa).

This sequence belongs to the LutC/YkgG family.

Is involved in L-lactate degradation and allows cells to grow with lactate as the sole carbon source. The polypeptide is Lactate utilization protein C (Geobacillus kaustophilus (strain HTA426)).